A 396-amino-acid chain; its full sequence is Putative nickel insertion protein (396 aa).

The protein belongs to the LarC family.

In Methanosarcina acetivorans (strain ATCC 35395 / DSM 2834 / JCM 12185 / C2A), this protein is Putative nickel insertion protein.